Reading from the N-terminus, the 666-residue chain is Chaperone protein dnaK1 (666 aa).

Thr198 is subject to Phosphothreonine; by autocatalysis.

The protein belongs to the heat shock protein 70 family.

In terms of biological role, acts as a chaperone. The chain is Chaperone protein dnaK1 (dnaK1) from Prochlorococcus marinus (strain SARG / CCMP1375 / SS120).